Here is a 285-residue protein sequence, read N- to C-terminus: Acetylglutamate kinase (285 aa).

Residues 64-65, arginine 86, and asparagine 181 each bind substrate; that span reads GG.

This sequence belongs to the acetylglutamate kinase family. ArgB subfamily.

It is found in the cytoplasm. The enzyme catalyses N-acetyl-L-glutamate + ATP = N-acetyl-L-glutamyl 5-phosphate + ADP. Its pathway is amino-acid biosynthesis; L-arginine biosynthesis; N(2)-acetyl-L-ornithine from L-glutamate: step 2/4. Its function is as follows. Catalyzes the ATP-dependent phosphorylation of N-acetyl-L-glutamate. The polypeptide is Acetylglutamate kinase (Clostridium beijerinckii (strain ATCC 51743 / NCIMB 8052) (Clostridium acetobutylicum)).